A 442-amino-acid polypeptide reads, in one-letter code: MAKKLYIETHGCQMNEYDSSRMVDLLGEHQALEVTARAEDADVILLNTCSIRERAQDRVYSQLGRWRELKLANPEMVIAVGGCVASQEGAAIRDRAPYVDVVFGPQTLHRLPEMIDAARVTRLPQVDVSFPEIEKFDHLPEPRVDGPSAYVSVMEGCSKYCTFCVVPYTRGEEVSRPFDDVLSEVIHLAENGVREVTLLGQNVNGYRGTTHDGRVADLADLIRVVAAVDGIDRIRYTTSHPLEFSDSLIQAHAEVPELVKHLHLPVQSGSDRILAAMKRNHTTLEYKSRLRKLRAAVPGISISSDFIVGFPGETEKDFDNTMKLIEDVGFDFSFSFVYSPRPGTPAADLKDDTPEALKKERLAALQHRLNQQGFEISRQMVGSIQRILVTDYSKKDPGELQGRTENNRIVNFRCDNPKLIGQFADVHIDDAQPHSLRGSLLQ.

The 118-residue stretch at 3 to 120 (KKLYIETHGC…LPEMIDAARV (118 aa)) folds into the MTTase N-terminal domain. Residues C12, C49, C83, C157, C161, and C164 each coordinate [4Fe-4S] cluster. The 233-residue stretch at 143 to 375 (RVDGPSAYVS…QHRLNQQGFE (233 aa)) folds into the Radical SAM core domain. The TRAM domain occupies 378-442 (RQMVGSIQRI…PHSLRGSLLQ (65 aa)).

The protein belongs to the methylthiotransferase family. MiaB subfamily. In terms of assembly, monomer. The cofactor is [4Fe-4S] cluster.

The protein resides in the cytoplasm. It carries out the reaction N(6)-dimethylallyladenosine(37) in tRNA + (sulfur carrier)-SH + AH2 + 2 S-adenosyl-L-methionine = 2-methylsulfanyl-N(6)-dimethylallyladenosine(37) in tRNA + (sulfur carrier)-H + 5'-deoxyadenosine + L-methionine + A + S-adenosyl-L-homocysteine + 2 H(+). In terms of biological role, catalyzes the methylthiolation of N6-(dimethylallyl)adenosine (i(6)A), leading to the formation of 2-methylthio-N6-(dimethylallyl)adenosine (ms(2)i(6)A) at position 37 in tRNAs that read codons beginning with uridine. The sequence is that of tRNA-2-methylthio-N(6)-dimethylallyladenosine synthase from Pseudomonas syringae pv. syringae (strain B728a).